Here is an 81-residue protein sequence, read N- to C-terminus: uncharacterized protein (81 aa).

2 helical membrane passes run 1–21 and 27–47; these read MTLF…FSLL and IFIY…HHFF.

It localises to the membrane. This is an uncharacterized protein from Saccharomyces cerevisiae (strain ATCC 204508 / S288c) (Baker's yeast).